The following is a 903-amino-acid chain: Protein translocase subunit SecA (903 aa).

Residues Q87, 105-109, and D507 each bind ATP; that span reads GEGKT. A disordered region spans residues 854–893; it reads STMADSSGDVKSSTAESKAPYVRDGRKVGRNEPCPCGSGK. Polar residues predominate over residues 856-869; that stretch reads MADSSGDVKSSTAE. A compositionally biased stretch (basic and acidic residues) spans 874–883; sequence YVRDGRKVGR. Residues C887, C889, C898, and H899 each coordinate Zn(2+).

The protein belongs to the SecA family. Monomer and homodimer. Part of the essential Sec protein translocation apparatus which comprises SecA, SecYEG and auxiliary proteins SecDF-YajC and YidC. Requires Zn(2+) as cofactor.

The protein resides in the cell inner membrane. Its subcellular location is the cytoplasm. It catalyses the reaction ATP + H2O + cellular proteinSide 1 = ADP + phosphate + cellular proteinSide 2.. Functionally, part of the Sec protein translocase complex. Interacts with the SecYEG preprotein conducting channel. Has a central role in coupling the hydrolysis of ATP to the transfer of proteins into and across the cell membrane, serving both as a receptor for the preprotein-SecB complex and as an ATP-driven molecular motor driving the stepwise translocation of polypeptide chains across the membrane. The polypeptide is Protein translocase subunit SecA (Nitrosococcus oceani (strain ATCC 19707 / BCRC 17464 / JCM 30415 / NCIMB 11848 / C-107)).